Here is a 359-residue protein sequence, read N- to C-terminus: 4-hydroxy-3-methylbut-2-en-1-yl diphosphate synthase (flavodoxin) (359 aa).

[4Fe-4S] cluster contacts are provided by Cys-263, Cys-266, Cys-298, and Glu-305.

The protein belongs to the IspG family. Requires [4Fe-4S] cluster as cofactor.

The enzyme catalyses (2E)-4-hydroxy-3-methylbut-2-enyl diphosphate + oxidized [flavodoxin] + H2O + 2 H(+) = 2-C-methyl-D-erythritol 2,4-cyclic diphosphate + reduced [flavodoxin]. Its pathway is isoprenoid biosynthesis; isopentenyl diphosphate biosynthesis via DXP pathway; isopentenyl diphosphate from 1-deoxy-D-xylulose 5-phosphate: step 5/6. In terms of biological role, converts 2C-methyl-D-erythritol 2,4-cyclodiphosphate (ME-2,4cPP) into 1-hydroxy-2-methyl-2-(E)-butenyl 4-diphosphate. The chain is 4-hydroxy-3-methylbut-2-en-1-yl diphosphate synthase (flavodoxin) from Wolinella succinogenes (strain ATCC 29543 / DSM 1740 / CCUG 13145 / JCM 31913 / LMG 7466 / NCTC 11488 / FDC 602W) (Vibrio succinogenes).